The primary structure comprises 105 residues: Pyruvate synthase subunit PorD (105 aa).

2 4Fe-4S ferredoxin-type domains span residues 44–73 (FRPE…LDEE) and 74–103 (GYPV…MVRE). [4Fe-4S] cluster contacts are provided by Cys53, Cys56, Cys59, Cys63, Cys83, Cys86, Cys89, and Cys93.

As to quaternary structure, heterotetramer of one alpha, one beta, one delta and one gamma chain. [4Fe-4S] cluster serves as cofactor.

This is Pyruvate synthase subunit PorD (porD) from Pyrococcus abyssi (strain GE5 / Orsay).